A 159-amino-acid chain; its full sequence is Ribosomal RNA large subunit methyltransferase H (159 aa).

S-adenosyl-L-methionine contacts are provided by residues Leu76, Gly108, and Phe127 to Met132.

It belongs to the RNA methyltransferase RlmH family. Homodimer.

It is found in the cytoplasm. The catalysed reaction is pseudouridine(1915) in 23S rRNA + S-adenosyl-L-methionine = N(3)-methylpseudouridine(1915) in 23S rRNA + S-adenosyl-L-homocysteine + H(+). Functionally, specifically methylates the pseudouridine at position 1915 (m3Psi1915) in 23S rRNA. The chain is Ribosomal RNA large subunit methyltransferase H from Lactobacillus delbrueckii subsp. bulgaricus (strain ATCC 11842 / DSM 20081 / BCRC 10696 / JCM 1002 / NBRC 13953 / NCIMB 11778 / NCTC 12712 / WDCM 00102 / Lb 14).